The chain runs to 492 residues: Transmembrane protein 104 homolog (492 aa).

Over Met-1 to Val-17 the chain is Cytoplasmic. The chain crosses the membrane as a helical span at residues Gly-18–Phe-38. Residues Gln-39 to Leu-44 lie on the Extracellular side of the membrane. A helical membrane pass occupies residues Leu-45–Ile-65. The Cytoplasmic segment spans residues Glu-66–Lys-113. The helical transmembrane segment at Val-114 to Tyr-134 threads the bilayer. Topologically, residues Ser-135–Arg-176 are extracellular. Asn-151 carries an N-linked (GlcNAc...) asparagine glycan. A helical membrane pass occupies residues Phe-177–Lys-197. At Thr-198–Arg-209 the chain is on the cytoplasmic side. A helical membrane pass occupies residues Trp-210–Ala-230. Topologically, residues Ala-231–Asn-237 are extracellular. The helical transmembrane segment at Phe-238–Ile-258 threads the bilayer. The Cytoplasmic portion of the chain corresponds to Pro-259–Lys-274. The chain crosses the membrane as a helical span at residues Ile-275–Phe-295. Residues Ala-296–Phe-324 are Extracellular-facing. An N-linked (GlcNAc...) asparagine glycan is attached at Asn-313. The helical transmembrane segment at Leu-325 to Ile-345 threads the bilayer. Residues Asn-346–Ser-392 are Cytoplasmic-facing. A helical membrane pass occupies residues Val-393–Thr-413. Residues Asp-414–Asp-415 are Extracellular-facing. Residues Met-416–Pro-436 traverse the membrane as a helical segment. The Cytoplasmic segment spans residues Cys-437–Pro-466. Residues Ile-467–Leu-487 form a helical membrane-spanning segment. The Extracellular segment spans residues Val-488–Phe-492.

It belongs to the TMEM104 family.

It is found in the membrane. The chain is Transmembrane protein 104 homolog from Caenorhabditis elegans.